We begin with the raw amino-acid sequence, 150 residues long: Deoxyuridine 5'-triphosphate nucleotidohydrolase (150 aa).

Residues 69-71 (RSG), N82, 86-88 (TID), and K96 each bind substrate.

It belongs to the dUTPase family. Mg(2+) serves as cofactor.

The catalysed reaction is dUTP + H2O = dUMP + diphosphate + H(+). It functions in the pathway pyrimidine metabolism; dUMP biosynthesis; dUMP from dCTP (dUTP route): step 2/2. Its function is as follows. This enzyme is involved in nucleotide metabolism: it produces dUMP, the immediate precursor of thymidine nucleotides and it decreases the intracellular concentration of dUTP so that uracil cannot be incorporated into DNA. This chain is Deoxyuridine 5'-triphosphate nucleotidohydrolase, found in Aquifex aeolicus (strain VF5).